A 96-amino-acid chain; its full sequence is DNA-binding protein HmvA (96 aa).

The interval 52 to 55 (KTIK) is interaction with DNA.

The protein belongs to the archaeal histone HMF family. In terms of assembly, homodimer. Dimers then assemble into higher oligomers, with the DNA wrapped around the protein core.

The protein resides in the cytoplasm. It localises to the chromosome. Functionally, binds and compact DNA (95 to 150 base pairs) to form nucleosome-like structures that contain positive DNA supercoils. Increases the resistance of DNA to thermal denaturation (in vitro). The sequence is that of DNA-binding protein HmvA (hmvA) from Methanocaldococcus jannaschii (strain ATCC 43067 / DSM 2661 / JAL-1 / JCM 10045 / NBRC 100440) (Methanococcus jannaschii).